The chain runs to 347 residues: Acetylglutamate kinase, chloroplastic (347 aa).

Residues 1–50 (MATVTSNASPKSFSFTVSNPFKTLIPNKSPSLCYPTRNKNHHRLGFSIKA) constitute a chloroplast transit peptide. An N-acetylthreonine modification is found at T51. 94–95 (GA) contacts ATP. Residues G126, R148, and 242–245 (NINA) contribute to the N-acetyl-L-glutamate site. An L-arginine-binding site is contributed by K260. Residues 265–266 (TD) and L271 contribute to the ATP site. Residue K282 participates in L-arginine binding. 297 to 305 (KVAGGMIPK) is a binding site for ATP. Residues 334-337 (EIMS) and G342 each bind L-arginine.

It belongs to the acetylglutamate kinase family. ArgB subfamily. As to quaternary structure, interacts with GLB1. Interaction is dependent of MgATP and inhibited by 2-oxoglutarate, arginine, glutamate, citrate, and oxaloacetate.

The protein localises to the plastid. It localises to the chloroplast stroma. It carries out the reaction N-acetyl-L-glutamate + ATP = N-acetyl-L-glutamyl 5-phosphate + ADP. The protein operates within amino-acid biosynthesis; L-arginine biosynthesis; N(2)-acetyl-L-ornithine from L-glutamate: step 2/4. With respect to regulation, inhibited by arginine. Inhibition is relieved by binding to GLB1. In terms of biological role, involved in the arginine biosynthetic pathway via the intermediate compound ornithine. The polypeptide is Acetylglutamate kinase, chloroplastic (Arabidopsis thaliana (Mouse-ear cress)).